A 144-amino-acid chain; its full sequence is 6,7-dimethyl-8-ribityllumazine synthase (144 aa).

5-amino-6-(D-ribitylamino)uracil is bound by residues phenylalanine 21, 56-58 (AYE), and 80-82 (AVI). 85-86 (GT) lines the (2S)-2-hydroxy-3-oxobutyl phosphate pocket. Histidine 88 acts as the Proton donor in catalysis. Phenylalanine 113 serves as a coordination point for 5-amino-6-(D-ribitylamino)uracil. Arginine 127 contributes to the (2S)-2-hydroxy-3-oxobutyl phosphate binding site.

The protein belongs to the DMRL synthase family. In terms of assembly, forms an icosahedral capsid composed of 60 subunits, arranged as a dodecamer of pentamers.

The enzyme catalyses (2S)-2-hydroxy-3-oxobutyl phosphate + 5-amino-6-(D-ribitylamino)uracil = 6,7-dimethyl-8-(1-D-ribityl)lumazine + phosphate + 2 H2O + H(+). Its pathway is cofactor biosynthesis; riboflavin biosynthesis; riboflavin from 2-hydroxy-3-oxobutyl phosphate and 5-amino-6-(D-ribitylamino)uracil: step 1/2. Its function is as follows. Catalyzes the formation of 6,7-dimethyl-8-ribityllumazine by condensation of 5-amino-6-(D-ribitylamino)uracil with 3,4-dihydroxy-2-butanone 4-phosphate. This is the penultimate step in the biosynthesis of riboflavin. The protein is 6,7-dimethyl-8-ribityllumazine synthase (ribH) of Photobacterium leiognathi.